The sequence spans 1287 residues: FYVE zinc finger domain protein UPA1 (1287 aa).

A disordered region spans residues 1 to 298 (MTIPDPANII…SSTSLSAPAE (298 aa)). Residues 86 to 99 (DSSSFGSKPSSSAS) show a composition bias toward low complexity. The segment covering 115 to 136 (WATSSTTSHPSKASQSTLSPNA) has biased composition (polar residues). Residues 128 to 144 (SQSTLSPNASVFKPSRS) carry the PAM2 motif. Composition is skewed to basic and acidic residues over residues 177-187 (RPDHAPLDHEQ) and 201-211 (KVEEQRGDHSI). The span at 212–235 (PHQNGLVSAQAQTASDAVSTSKYT) shows a compositional bias: polar residues. A PAM2L 1 motif is present at residues 239-253 (ADQEEDQDDFVYPGA). A compositionally biased stretch (polar residues) spans 255–294 (SPSSGQAAVQDEQQAVTDSQTTKSLTKQESDPEASSTSLS). ANK repeat units follow at residues 366–395 (NGLVPLHFAAKDGKTDIVRWLITQAGAIVE), 400–429 (EGETALHKAAMAGKLSVASLLLSHGADANA), 433–463 (DGWTALHNACSRGYLDLVRLLVDRGHAQIDV), and 468–497 (GAWTPLMNAASKGHLPVVRHLTAKYHADPF). 4 disordered regions span residues 582–630 (NGGK…VGLP), 643–697 (RVGP…ASAQ), 934–960 (REAAGLDEDEDEDAADDDDDEFIYPNS), and 977–1005 (TSGTLSRPSLSQRQSSAASMLRNSVAPSE). Positions 674-695 (STPTPESVLQARRGTSSVNGAS) are enriched in polar residues. Positions 938–955 (GLDEDEDEDAADDDDDEF) are enriched in acidic residues. Residues 941 to 960 (EDEDEDAADDDDDEFIYPNS) carry the PAM2L 2 motif. A compositionally biased stretch (low complexity) spans 981 to 995 (LSRPSLSQRQSSAAS). An FYVE-type zinc finger spans residues 1055–1129 (DEEAKDCIGC…VCNGCHAELQ (75 aa)). The Zn(2+) site is built by C1061, C1064, C1077, C1080, C1085, C1088, C1121, and C1124. The RING-type; atypical zinc-finger motif lies at 1243–1283 (CSICMEDFVANSTIARLPCLCYFHRGCIDSWFKRGRECPVH).

Belongs to the UPA1 PAM2 domain-binding protein family. In terms of assembly, part of large ribonucleoprotein complexes (mRNPs) containing RNA-binding proteins RRM4 and PAB1, endosome-binding protein UPA1, core scaffold protein UPA2 and associated factor GRP1. Interacts (via PAM2 motif) with PAB1 (via PABC domain). Interacts (via PAM2L motifs) with RRM4.

The protein localises to the cytoplasm. It localises to the cytoskeleton. It is found in the endosome. Its function is as follows. FYVE zinc finger domain protein that functions in endosomal targeting and transport of mRNAs, as well as associated ribosomes. The endosomal mRNA transport regulates polarity of the infectious hyphae by transporting a broad spectrum of cargo mRNAs from the nucleus to cell poles. Involved in chitinase CTS1 secretion. Dispensable for general endosomal functions but crucial for endosomal recruitment of RRM4. This Mycosarcoma maydis (Corn smut fungus) protein is FYVE zinc finger domain protein UPA1.